A 131-amino-acid chain; its full sequence is Small ribosomal subunit protein bS6 (131 aa).

The interval 97–131 is disordered; the sequence is TEASPMAKARDERDSRRGPAGERSYDEAHAEEIAE. Residues 104 to 131 show a composition bias toward basic and acidic residues; that stretch reads KARDERDSRRGPAGERSYDEAHAEEIAE.

Belongs to the bacterial ribosomal protein bS6 family.

Binds together with bS18 to 16S ribosomal RNA. The protein is Small ribosomal subunit protein bS6 of Shewanella baltica (strain OS223).